A 156-amino-acid polypeptide reads, in one-letter code: Methylated-DNA--protein-cysteine methyltransferase (156 aa).

Residue C120 is the Nucleophile; methyl group acceptor of the active site.

The protein belongs to the MGMT family.

Its subcellular location is the cytoplasm. The catalysed reaction is a 6-O-methyl-2'-deoxyguanosine in DNA + L-cysteinyl-[protein] = S-methyl-L-cysteinyl-[protein] + a 2'-deoxyguanosine in DNA. The enzyme catalyses a 4-O-methyl-thymidine in DNA + L-cysteinyl-[protein] = a thymidine in DNA + S-methyl-L-cysteinyl-[protein]. Involved in the cellular defense against the biological effects of O6-methylguanine (O6-MeG) and O4-methylthymine (O4-MeT) in DNA. Repairs the methylated nucleobase in DNA by stoichiometrically transferring the methyl group to a cysteine residue in the enzyme. This is a suicide reaction: the enzyme is irreversibly inactivated. The protein is Methylated-DNA--protein-cysteine methyltransferase of Metallosphaera sedula (strain ATCC 51363 / DSM 5348 / JCM 9185 / NBRC 15509 / TH2).